The sequence spans 459 residues: Protein ABHD15 (459 aa).

A signal peptide spans Met1–Gly28. Catalysis depends on charge relay system residues Asp351 and His382. The residue at position 425 (Ser425) is a Phosphoserine.

Belongs to the AB hydrolase superfamily. AB hydrolase 4 family. In terms of assembly, interacts with PDE3B; this interaction regulates PDE3B's stability and expression and, thereby, impacts the antilipolytic action of insulin. As to expression, mainly expressed in adipocytes and adipose depots, followed by a weak expression in liver and pancreas. In white adipose tissue (WAT), only expressed in mature adipocytes and primary adipocytes differentiated from stromal vascular cells (SVCs), but not in undifferentiated SVCs.

The protein localises to the secreted. In terms of biological role, may regulate adipocyte lipolysis and liver lipid accumulation. This chain is Protein ABHD15, found in Mus musculus (Mouse).